The chain runs to 740 residues: Death domain-associated protein 6 (740 aa).

A disordered region spans residues 1–55 (MATANSIIVLDDDDEDEAAAQPGPSHPLPNAASPGAEAPSSSEPHGARGSSSSGG). The segment at 1 to 160 (MATANSIIVL…TSNEPSGNNP (160 aa)) is necessary for interaction with USP7 and ATRX. Ser-25 bears the Phosphoserine mark. Low complexity predominate over residues 29 to 55 (PNAASPGAEAPSSSEPHGARGSSSSGG). Residue Lys-142 forms a Glycyl lysine isopeptide (Lys-Gly) (interchain with G-Cter in SUMO2) linkage. The disordered stretch occupies residues 147 to 185 (PAATTSNEPSGNNPPTHLSLDPTNAENTASQSPRTRGSR). Over residues 149-181 (ATTSNEPSGNNPPTHLSLDPTNAENTASQSPRT) the composition is skewed to polar residues. Residues Ser-178 and Ser-213 each carry the phosphoserine modification. Coiled coils occupy residues 180–217 (RTRGSRRQIQRLEQLLALYVAEIRRLQEKELDLSELDD) and 358–399 (ARRL…ARLQ). An interaction with histone H3.3 region spans residues 183–417 (GSRRQIQRLE…TPEASLDSGE (235 aa)). A necessary for interaction with USP7 region spans residues 347-570 (GVDPALSDPV…SPVSQLFELE (224 aa)). Positions 384 to 724 (DKSEEGERKK…PRPGTCKTSV (341 aa)) are disordered. A Nuclear localization signal motif is present at residues 391–395 (RKKRR). Phosphoserine is present on residues Ser-412 and Ser-424. Residues 430–489 (ASRAETDDEDDEESDEEEEEEEEEEEEEATDSEEEEDLEQMQEGQEDDEEEDEEEEAAAG) are a coiled coil. A compositionally biased stretch (acidic residues) spans 435–486 (TDDEDDEESDEEEEEEEEEEEEEATDSEEEEDLEQMQEGQEDDEEEDEEEEA). Residue Thr-459 is modified to Phosphothreonine. Phosphoserine is present on residues Ser-495 and Ser-498. Residues 496 to 505 (PMSSLQISNE) are compositionally biased toward polar residues. The interval 501-625 (QISNEKNLEP…GVSPHNWGDS (125 aa)) is interaction with MAP3K5. Lys-512 carries the post-translational modification N6-acetyllysine. The segment covering 514–524 (ISRSSGEQQNK) has biased composition (polar residues). Low complexity predominate over residues 529 to 542 (SPSLLSEEPLAPSS). Residues 551-561 (QPEELTLEEES) are compositionally biased toward acidic residues. Residues Ser-561 and Ser-580 each carry the phosphoserine modification. The segment covering 578–590 (TPSSVETDISSSR) has biased composition (polar residues). Residues 626–740 (GPPCKKSRKE…EEIIVLSDSD (115 aa)) are interaction with SPOP. (Microbial infection) Interaction with Puumala hantavirus nucleoprotein stretches follow at residues 627–634 (PPCKKSRK) and 658–663 (KNGKKI). The Nuclear localization signal signature appears at 628-634 (PCKKSRK). Residues Lys-630 and Lys-631 each participate in a glycyl lysine isopeptide (Lys-Gly) (interchain with G-Cter in SUMO1) cross-link. A compositionally biased stretch (basic and acidic residues) spans 650-660 (ERQRSVHEKNG). Phosphoserine is present on residues Ser-668 and Ser-671. Residues 673–683 (LASLAPVADSS) show a composition bias toward low complexity. 4 positions are modified to phosphoserine: Ser-688, Ser-702, Ser-737, and Ser-739. The span at 693–711 (LVTSSLCIPSPARLSQTPH) shows a compositional bias: polar residues. The segment at 733-740 (IIVLSDSD) is sumo interaction motif (SIM).

It belongs to the DAXX family. Homomultimer. Interacts (via C-terminus) with TNFRSF6 (via death domain). Interacts with PAX5, SLC2A4/GLUT4, MAP3K5, TGFBR2, phosphorylated dimeric HSPB1/HSP27, CENPC, ETS1, sumoylated PML, UBE2I, MCRS1 and TP53. Interacts (via N-terminus) with HIPK2 and HIPK3. Interacts with HIPK1, which induces translocation from PML/POD/ND10 nuclear bodies to chromatin and enhances association with HDAC1. Interacts (non-phosphorylated) with PAX3, PAX7, DEK, HDAC1, HDAC2, HDAC3, acetylated histone H4 and histones H2A, H2B, H3, H3.3 and H4. Interacts with SPOP; mediating CUL3-dependent proteasomal degradation. Interacts with CBP; the interaction is dependent the sumoylation of CBP and suppresses CBP transcriptional activity via recruitment of HDAC2 directly in the complex with TP53 and HIPK2. Interacts with AXIN1; the interaction stimulates the interaction of DAXX with TP53, stimulates 'Ser-46' phosphorylation of TP53 on and induces cell death on UV irradiation. Interacts with MDM2; the interaction is direct. Interacts with USP7; the interaction is direct and independent of MDM2 and TP53. Part of a complex with DAXX, MDM2 and USP7 under non-stress conditions. Interacts (via N-terminus) with RASSF1 (via C-terminus); the interaction is independent of MDM2 and TP53; RASSF1 isoform A disrupts interactions among MDM2, DAXX and USP7, thus contributing to the efficient activation of TP53 by promoting MDM2 self-ubiquitination in cell-cycle checkpoint control in response to DNA damage. Interacts with ATRX to form the chromatin remodeling complex ATRX:DAXX. Interacts with HSF1 (via homotrimeric form preferentially); this interaction relieves homotrimeric HSF1 from repression of its transcriptional activity by HSP90-dependent multichaperone complex upon heat shock. Interacts with SUMO1P1/SUMO5. In terms of assembly, (Microbial infection) Interacts with human cytomegalovirus/HHV-5 tegument phosphoprotein pp71 and protein UL123. As to quaternary structure, (Microbial infection) Interacts with Epstein-Barr virus protein BNRF1. (Microbial infection) Interacts with human adenovirus 5 E1B-55K protein; this interaction might alterate the normal interactions of DAXX, PML, and TP53, which may contribute to cell transformation. In terms of assembly, (Microbial infection) Interacts with Puumala hantavirus nucleoprotein. Sumoylated with SUMO1 on multiple lysine residues. Post-translationally, phosphorylated by HIPK1 upon glucose deprivation. In terms of processing, polyubiquitinated; which is promoted by CUL3 and SPOP and results in proteasomal degradation. Ubiquitinated by MDM2; inducing its degradation. Deubiquitinated by USP7; leading to stabilize it. Ubiquitous.

Its subcellular location is the cytoplasm. The protein resides in the nucleus. It is found in the nucleoplasm. The protein localises to the PML body. It localises to the nucleolus. Its subcellular location is the chromosome. The protein resides in the centromere. Functionally, transcription corepressor known to repress transcriptional potential of several sumoylated transcription factors. Down-regulates basal and activated transcription. Its transcription repressor activity is modulated by recruiting it to subnuclear compartments like the nucleolus or PML/POD/ND10 nuclear bodies through interactions with MCSR1 and PML, respectively. Seems to regulate transcription in PML/POD/ND10 nuclear bodies together with PML and may influence TNFRSF6-dependent apoptosis thereby. Inhibits transcriptional activation of PAX3 and ETS1 through direct protein-protein interactions. Modulates PAX5 activity; the function seems to involve CREBBP. Acts as an adapter protein in a MDM2-DAXX-USP7 complex by regulating the RING-finger E3 ligase MDM2 ubiquitination activity. Under non-stress condition, in association with the deubiquitinating USP7, prevents MDM2 self-ubiquitination and enhances the intrinsic E3 ligase activity of MDM2 towards TP53, thereby promoting TP53 ubiquitination and subsequent proteasomal degradation. Upon DNA damage, its association with MDM2 and USP7 is disrupted, resulting in increased MDM2 autoubiquitination and consequently, MDM2 degradation, which leads to TP53 stabilization. Acts as a histone chaperone that facilitates deposition of histone H3.3. Acts as a targeting component of the chromatin remodeling complex ATRX:DAXX which has ATP-dependent DNA translocase activity and catalyzes the replication-independent deposition of histone H3.3 in pericentric DNA repeats outside S-phase and telomeres, and the in vitro remodeling of H3.3-containing nucleosomes. Does not affect the ATPase activity of ATRX but alleviates its transcription repression activity. Upon neuronal activation associates with regulatory elements of selected immediate early genes where it promotes deposition of histone H3.3 which may be linked to transcriptional induction of these genes. Required for the recruitment of histone H3.3:H4 dimers to PML-nuclear bodies (PML-NBs); the process is independent of ATRX and facilitated by ASF1A; PML-NBs are suggested to function as regulatory sites for the incorporation of newly synthesized histone H3.3 into chromatin. In case of overexpression of centromeric histone variant CENPA (as found in various tumors) is involved in its mislocalization to chromosomes; the ectopic localization involves a heterotypic tetramer containing CENPA, and histones H3.3 and H4 and decreases binding of CTCF to chromatin. Proposed to mediate activation of the JNK pathway and apoptosis via MAP3K5 in response to signaling from TNFRSF6 and TGFBR2. Interaction with HSPB1/HSP27 may prevent interaction with TNFRSF6 and MAP3K5 and block DAXX-mediated apoptosis. In contrast, in lymphoid cells JNC activation and TNFRSF6-mediated apoptosis may not involve DAXX. Shows restriction activity towards human cytomegalovirus (HCMV). Plays a role as a positive regulator of the heat shock transcription factor HSF1 activity during the stress protein response. This chain is Death domain-associated protein 6 (DAXX), found in Homo sapiens (Human).